The sequence spans 98 residues: NADH-ubiquinone oxidoreductase chain 4L (98 aa).

3 helical membrane passes run 1–21 (MSLV…GLLM), 29–49 (SLLC…IMIL), and 61–81 (IILL…LVMV).

It belongs to the complex I subunit 4L family. As to quaternary structure, core subunit of respiratory chain NADH dehydrogenase (Complex I) which is composed of 45 different subunits.

The protein resides in the mitochondrion inner membrane. It carries out the reaction a ubiquinone + NADH + 5 H(+)(in) = a ubiquinol + NAD(+) + 4 H(+)(out). Functionally, core subunit of the mitochondrial membrane respiratory chain NADH dehydrogenase (Complex I) which catalyzes electron transfer from NADH through the respiratory chain, using ubiquinone as an electron acceptor. Part of the enzyme membrane arm which is embedded in the lipid bilayer and involved in proton translocation. This Mogera wogura (Japanese mole) protein is NADH-ubiquinone oxidoreductase chain 4L (MT-ND4L).